An 89-amino-acid chain; its full sequence is Omega-theraphotoxin-Ba1c (89 aa).

A signal peptide spans 1 to 23 (MRSLTLAAVLACSLLLVFHTSAA). A propeptide spanning residues 24-50 (EEHEAQEGYLMNPGDTDTALATVDDER) is cleaved from the precursor. Cystine bridges form between Cys-54-Cys-75, Cys-58-Cys-81, and Cys-67-Cys-86.

It belongs to the neurotoxin 12 (Hwtx-2) family. 06 (TXP1) subfamily. Expressed by the venom gland.

Its subcellular location is the secreted. In terms of biological role, inhibits voltage-gated calcium channels (Cav) in rat cerebellar granule cells. Has insecticidal activity. The protein is Omega-theraphotoxin-Ba1c of Brachypelma albiceps (Mexican golden redrump tarantula).